We begin with the raw amino-acid sequence, 1005 residues long: Sorbin and SH3 domain-containing protein 1 homolog (1005 aa).

7 disordered regions span residues 1-31, 61-86, 99-153, 243-292, 386-409, 427-475, and 542-622; these read MMHH…PAAD, LDMK…STPS, YVDP…PHSA, NELK…FNSE, FEEK…FKND, TTKN…TAAA, and MHRK…SNEE. Residues 11-25 show a composition bias toward polar residues; sequence NLANSSEPQQPSGQY. Over residues 260–269 the composition is skewed to polar residues; the sequence is VMTSSTENLK. Residues 270-279 are compositionally biased toward low complexity; that stretch reads NGNNQQNQQP. A compositionally biased stretch (polar residues) spans 392–409; the sequence is RSPMTSTPSYKEQGFKND. Residues 448-475 show a composition bias toward low complexity; that stretch reads SDTYPVSSSTTSTWPSHTTTPTTTTAAA. The SoHo domain maps to 499-567; the sequence is VMSTNMDEPI…FINPSNVTDG (69 aa). Positions 544 to 557 are enriched in basic and acidic residues; that stretch reads RKGEDGSNEGKEQH. Residues 559 to 589 are compositionally biased toward polar residues; the sequence is INPSNVTDGIGRTTPTASNLGRSRENLSFNQ. Positions 610-642 form a coiled coil; sequence YNNQERVKQSNEEELLRLKAEKLAEELRKEKER. SH3 domains lie at 683–742, 745–805, and 946–1005; these read QPVM…INTG, GDSQ…PIEQ, and KGSE…VKRH.

In terms of assembly, may interact with deb-1. As to expression, expressed in body wall muscles, muscle arm attachment sites at the nerve ring, all non-striated muscles, and distal tip cells of the gonad. Highly expressed in the origins and insertions of the vulval and anal depressor muscles and the spicule-associated and diagonal muscles of the male tail. Expressed in small puncta throughout the uterus, stomatointestinal muscle and proximal gonadal sheath tissues. Not expressed in the pharynx.

It is found in the cell junction. The protein resides in the adherens junction. The protein localises to the cell membrane. It localises to the focal adhesion. Its function is as follows. Required for organization of sarcomeres in body wall muscles and for maintaining normal mitochondrial position in myocytes. The chain is Sorbin and SH3 domain-containing protein 1 homolog from Caenorhabditis elegans.